Consider the following 73-residue polypeptide: Small hydrophobic protein (73 aa).

Topologically, residues 1–19 are intravirion; it reads MNNTSTMIEFTGKFWTYFT. Residues 20–40 traverse the membrane as a helical; Signal-anchor for type II membrane protein segment; that stretch reads LVFMMLIIGFFFVITSLVAAI. Topologically, residues 41–73 are virion surface; that stretch reads LNKLCDLNDHHTNSLDIRTGLRNDTQSITRAHV. A glycan (N-linked (GlcNAc...) asparagine; by host) is linked at Asn-63.

The protein belongs to the orthopneumovirus small hydrophobic protein family. Homopentamer forming a funnel-like pore. Interacts with glycoprotein G; this interaction occurs on the surface of virion particles and infected cells. Interacts with host BCAP31 (via C-terminus); this interaction is direct. Post-translationally, four species of SH have been detected in infected cell cytoplasm: a 7.5 kDa non-glycosylated form (SH0), a 13-15 kDa form that contains one or two N-linked carbohydrate side chains of the high-mannose type (SHg), a 21-30 kDa polylactosaminoglycan-modified form of the protein (SHp), and the isoform generated by alternative translational initiation. Of these different forms, SH0 is by far the most abundant protein detected during virus infection. In terms of processing, tyrosine phosphorylated.

The protein localises to the virion membrane. It is found in the host cell membrane. The protein resides in the host Golgi apparatus membrane. It localises to the host endoplasmic reticulum membrane. With respect to regulation, channel activity is inhibited by copper. Also inhibited by small-molecule pyronin B. In terms of biological role, viroporin that forms a homopentameric ion channel displaying low ion selectivity. May play a role in virus morphogenesis and pathogenicity at various stages of the viral life cycle. Accumulates at the membrane of the Golgi apparatus in infected cells and may facilitate virus release by modifying the secretory pathway. May enhance host membrane permeability and disrupt cellular ion homeostasis, which can be sensed as damage-associated molecular patterns/danger signals, triggering NLRP3 inflammasome activation and inflammatory immune response. Also inhibits host TNFA-mediated signaling pathway and may delay apoptosis, allowing time for the virus to replicate. The polypeptide is Small hydrophobic protein (SH) (Bovine respiratory syncytial virus (strain A51908) (BRS)).